The sequence spans 111 residues: 4'-hydroxy-3'-methoxypropiophenone carrier protein ppsC (111 aa).

Residues 1 to 21 (MSAQVMRPGTPQHEGQEFLSG) form a disordered region.

It participates in secondary metabolite biosynthesis. In terms of biological role, 4'-hydroxy-3'-methoxypropiophenone carrier protein; part of the gene cluster that mediates the biosynthesis of 2,4'-dihydroxy-3'-methoxypropiophenone. The first step of the pathway is the conversion of acetate into acetyl-CoA by the acyl-CoA ligase ppsA. Acetyl-CoA is then used as a starter unit by the polyketide synthase ppsB and condensed with 4 malonyl-CoA unit to produce the pentaketide backbone. During polyketide extension, the polykedite chain is probably reduced and dehydrated by the KR and PT domains, respectively. O-methylation seems to be catalyzed by an unknown methyltransferase rather than by the CMeT domain of ppsB. Two hydroxylations and one further decarboxylation step catalyzed by yet unknown enzymes are then required to yield 4'-hydroxy-3'-methoxypropiophenone. PpsC functions as a carrier protein to transport 4'-hydroxy-3'-methoxypropiophenone to a specific cell compartment in which 4'-hydroxy-3'-methoxypropiophenone is hydroxylated to 2,4'-dihydroxy-3'-methoxypropiophenone by a still to be identified enzyme. The chain is 4'-hydroxy-3'-methoxypropiophenone carrier protein ppsC from Aspergillus oryzae (strain ATCC 42149 / RIB 40) (Yellow koji mold).